A 101-amino-acid chain; its full sequence is HssA/B-like protein 40 (101 aa).

The segment at 1–26 is disordered; the sequence is MTLFSSISSMSTSMSGSKSSISSFGS.

The protein belongs to the hssA/B family.

The sequence is that of HssA/B-like protein 40 (hssl40) from Dictyostelium discoideum (Social amoeba).